The sequence spans 189 residues: MGLLDAKVSNRNVLVTSVDNVMNWARLSSLWPMGFGLACCAIEMMATNASNYDLERFGIFPRSSPRQSDLMIVAGTVTMKMAERVVTLYEQMPEPRYVLSMGSCSNCGGPYWDHGYHVLKGVDRVIPVDVYVPGCPPRPEALIGGLMKIQELIRMEGLGISREEALKKLAEKSVDAQQVLDQTRKAAIA.

Positions 39, 40, 104, and 135 each coordinate [4Fe-4S] cluster.

The protein belongs to the complex I 20 kDa subunit family. As to quaternary structure, NDH-1 is composed of 14 different subunits. Subunits NuoB, C, D, E, F, and G constitute the peripheral sector of the complex. [4Fe-4S] cluster serves as cofactor.

The protein resides in the cell inner membrane. The catalysed reaction is a quinone + NADH + 5 H(+)(in) = a quinol + NAD(+) + 4 H(+)(out). NDH-1 shuttles electrons from NADH, via FMN and iron-sulfur (Fe-S) centers, to quinones in the respiratory chain. The immediate electron acceptor for the enzyme in this species is believed to be a menaquinone. Couples the redox reaction to proton translocation (for every two electrons transferred, four hydrogen ions are translocated across the cytoplasmic membrane), and thus conserves the redox energy in a proton gradient. In Chlorobaculum parvum (strain DSM 263 / NCIMB 8327) (Chlorobium vibrioforme subsp. thiosulfatophilum), this protein is NADH-quinone oxidoreductase subunit B.